The following is a 1038-amino-acid chain: Ubiquitin carboxyl-terminal hydrolase 36 (1038 aa).

Disordered stretches follow at residues 22-44 and 107-148; these read LGGN…TNGS and ANGH…PKPK. A compositionally biased stretch (polar residues) spans 23-44; the sequence is GGNSSAGSSTDQAKSGEDTNGS. In terms of domain architecture, USP spans 172–480; that stretch reads TGMINVGNTC…NAYIMFFELD (309 aa). The active-site Nucleophile is Cys181. The active-site Proton acceptor is the His439. Disordered regions lie at residues 487–794, 818–881, 912–985, and 1000–1038; these read PAAN…SKTG, GSPV…SNGS, LLVD…YNQN, and RFGG…QQQT. Composition is skewed to low complexity over residues 502–517, 546–559, and 587–606; these read STTP…PSPT, QQNQ…LQLG, and NGNK…KSIN. A phosphoserine mark is found at Ser513 and Ser515. The span at 629 to 641 shows a compositional bias: polar residues; sequence TTAQLPSMPNMTE. Thr658 and Thr662 each carry phosphothreonine. Residues Ser672 and Ser674 each carry the phosphoserine modification. Polar residues predominate over residues 703–728; it reads TNGHSKTNGSHTNGSASSSVHVNNSK. Residues 729–746 are compositionally biased toward basic and acidic residues; it reads QKTDAIDEIFKSLKKSAD. Ser747 bears the Phosphoserine mark. Over residues 747 to 756 the composition is skewed to acidic residues; that stretch reads SDEDDDEEEP. A compositionally biased stretch (low complexity) spans 766-776; that stretch reads PQKQSQSQSKA. Residues 777–786 show a composition bias toward pro residues; sequence PPSPKTPPSP. Ser779 bears the Phosphoserine mark. Thr782 is subject to Phosphothreonine. Phosphoserine occurs at positions 785 and 819. Thr825 is modified (phosphothreonine). Residues 832–844 are compositionally biased toward polar residues; sequence NPFSSSKPSTDSP. Residue Ser843 is modified to Phosphoserine. Thr846 carries the phosphothreonine modification. A compositionally biased stretch (polar residues) spans 859–881; that stretch reads ALKSHQQPRVGNGYQSNATSNGS. The span at 912–923 shows a compositional bias: basic and acidic residues; it reads LLVDAREQRQRD. Positions 942–953 are enriched in low complexity; the sequence is SGSAKGNNASNS.

This sequence belongs to the peptidase C19 family. As to quaternary structure, interacts with atms/PAF1, but not with CycT. Interacts (via C-terminus) with imd (via N-terminus).

Its subcellular location is the nucleus. It is found in the nucleolus. The protein localises to the cytoplasm. The enzyme catalyses Thiol-dependent hydrolysis of ester, thioester, amide, peptide and isopeptide bonds formed by the C-terminal Gly of ubiquitin (a 76-residue protein attached to proteins as an intracellular targeting signal).. Functionally, hydrolase that deubiquitinates polyubiquitinated target proteins including imd. Required for preventing the constitutive activation of the imd/NF-kappa-B (Imd) signaling cascade under unchalleneged conditions. Deubiquitinates imd linked 'Lys-63' chains which leads its proteasomal degradation and consequently down-regulation of the Imd signaling cascade. Removal of the activating 'Lys-63'-linked chains is likely to enable their replacement with 'Lys-48'-linked chains which act as 'tags' the for proteasomal degradation of imd. Required for maintaining multiple types of adult stem cells, including male and female germline, epithelial follicle cell and intestinal stem cells. May function as a transcriptional repressor by continually deubiquiting histone H2B at the promoters of genes critical for cellular differentiation, thereby preventing histone H3 'Lys-4' trimethylation (H3K4me3). Controls selective autophagy activation by ubiquitinated proteins. This chain is Ubiquitin carboxyl-terminal hydrolase 36 (scny), found in Drosophila melanogaster (Fruit fly).